A 112-amino-acid chain; its full sequence is Head virion protein G6P (112 aa).

Transmembrane regions (helical) follow at residues valine 3 to glycine 23, isoleucine 36 to glycine 56, and asparagine 80 to valine 100.

Belongs to the inovirus G6P protein family. As to quaternary structure, interacts with G3P; this interaction is required for proper integration of G3P and G6P into the virion.

The protein resides in the virion. It is found in the host membrane. Functionally, plays essential roles both in the entry of the viral genome into the bacterial host and in budding process. The formation of the G3P-G6P complex termed adsorption complex is essential for correct termination of filamentous phage assembly. This Escherichia coli (Bacteriophage f1) protein is Head virion protein G6P (VI).